We begin with the raw amino-acid sequence, 195 residues long: Guanylate kinase (195 aa).

The Guanylate kinase-like domain maps to 5–183; it reads GILFVISGPS…ALQKITAIII (179 aa). 12–19 serves as a coordination point for ATP; sequence GPSGVGKG.

This sequence belongs to the guanylate kinase family.

Its subcellular location is the cytoplasm. It carries out the reaction GMP + ATP = GDP + ADP. Its function is as follows. Essential for recycling GMP and indirectly, cGMP. The protein is Guanylate kinase of Syntrophomonas wolfei subsp. wolfei (strain DSM 2245B / Goettingen).